A 143-amino-acid polypeptide reads, in one-letter code: Large ribosomal subunit protein uL11 (143 aa).

Belongs to the universal ribosomal protein uL11 family. Part of the ribosomal stalk of the 50S ribosomal subunit. Interacts with L10 and the large rRNA to form the base of the stalk. L10 forms an elongated spine to which L12 dimers bind in a sequential fashion forming a multimeric L10(L12)X complex. One or more lysine residues are methylated.

In terms of biological role, forms part of the ribosomal stalk which helps the ribosome interact with GTP-bound translation factors. This Paenarthrobacter aurescens (strain TC1) protein is Large ribosomal subunit protein uL11.